Reading from the N-terminus, the 318-residue chain is Olfactory receptor-like protein COR1 (318 aa).

Residues 1-26 (MASGNCTTPTTFILSGLTDNPGLQMP) are Extracellular-facing. N-linked (GlcNAc...) asparagine glycosylation occurs at N5. A helical membrane pass occupies residues 27 to 49 (LFMVFLAIYTITLLTNLGLIALI). The Cytoplasmic segment spans residues 50–57 (SVDLHLQT). The chain crosses the membrane as a helical span at residues 58–79 (PMYIFLQNLSFTDAAYSTVITP). The Extracellular portion of the chain corresponds to 80–100 (KMLATFLEERKTISYVGCILQ). A disulfide bond links C97 and C179. The chain crosses the membrane as a helical span at residues 101-120 (YFSFVLLTVTESLLLAVMAY). Topologically, residues 121 to 139 (DRYVAICKPLLYPSIMTKA) are cytoplasmic. Residues 140-164 (VCWRLVESLYFLAFLNSLVHTSGLL) traverse the membrane as a helical segment. The Extracellular segment spans residues 165–205 (KLSFCYSNVVNHFFCDISPLFQISSSSIAISELLVIISGSL). The helical transmembrane segment at 206-226 (FVMSSIIIILISYVFIILTVV) threads the bilayer. Residues 227–239 (MIRSKDGKYKAFS) lie on the Cytoplasmic side of the membrane. Residues 240–260 (TCTSHLMAVSLFHGTVIFMYL) traverse the membrane as a helical segment. Over 261–271 (RPVKLFSLDTD) the chain is Extracellular. Residues 272 to 292 (KIASLFYTVVIPMLNPLIYSW) form a helical membrane-spanning segment. Over 293–318 (RNKEVKDALRRLTATTFGFIDSKAVQ) the chain is Cytoplasmic.

Belongs to the G-protein coupled receptor 1 family.

The protein resides in the cell membrane. Odorant receptor. The sequence is that of Olfactory receptor-like protein COR1 (COR1) from Gallus gallus (Chicken).